A 276-amino-acid chain; its full sequence is Octanoyltransferase LipM (276 aa).

The region spanning 31 to 246 is the BPL/LPL catalytic domain; that stretch reads GKVPPTVRFY…GFASGLEVEL (216 aa). Cys148 functions as the Acyl-thioester intermediate in the catalytic mechanism.

This sequence belongs to the octanoyltransferase LipM family. In terms of assembly, monomer.

The enzyme catalyses octanoyl-[ACP] + L-lysyl-[protein] = N(6)-octanoyl-L-lysyl-[protein] + holo-[ACP] + H(+). It functions in the pathway protein modification; protein lipoylation via endogenous pathway; protein N(6)-(lipoyl)lysine from octanoyl-[acyl-carrier-protein]. Catalyzes the transfer of endogenously produced octanoic acid from octanoyl-acyl-carrier-protein onto the lipoyl domain of GcvH, an intermediate carrier during protein lipoylation. This Brevibacillus brevis (strain 47 / JCM 6285 / NBRC 100599) protein is Octanoyltransferase LipM.